Reading from the N-terminus, the 348-residue chain is Ion-translocating oxidoreductase complex subunit D (348 aa).

The next 5 membrane-spanning stretches (helical) occupy residues 15-35 (LTAKFMLWVMVAMLPALGMQA), 36-56 (YFFGYGVFIQVFIALLLAVAI), 67-87 (LTAFYVADLSGVLTALILAMS), 88-108 (IPPYAPYWIIVIGIIVALLLA), and 125-145 (VAYALLLVSFPVQMTGWLVPI). Position 186 is an FMN phosphoryl threonine (T186). Transmembrane regions (helical) follow at residues 212–232 (LFANGWWQINLAFLAGGLLLI), 241–261 (IPAAMLGMFALLSGLTDLLLP), 265–285 (LNVVSQLFSGAMMFGAFFIAT), 298–318 (LIFGGLIGLFVYLIRYYGNYP), and 320–340 (AVAFSVLLANICVPLIDHYTQ).

The protein belongs to the NqrB/RnfD family. As to quaternary structure, the complex is composed of six subunits: RnfA, RnfB, RnfC, RnfD, RnfE and RnfG. FMN is required as a cofactor.

Its subcellular location is the cell inner membrane. Functionally, part of a membrane-bound complex that couples electron transfer with translocation of ions across the membrane. The polypeptide is Ion-translocating oxidoreductase complex subunit D (Actinobacillus pleuropneumoniae serotype 7 (strain AP76)).